The following is a 316-amino-acid chain: Probable cell division protein WhiA (316 aa).

The segment at residues 275–309 (TLKELGEMVASGKISKSGINHRLRKLDEIAEQLRT) is a DNA-binding region (H-T-H motif).

The protein belongs to the WhiA family.

The protein resides in the cytoplasm. It localises to the nucleoid. Involved in cell division and chromosome segregation. May influence the activity of FtsZ. Binds DNA, but does not seem to function as a transcription factor. This chain is Probable cell division protein WhiA, found in Bacillus subtilis (strain 168).